A 508-amino-acid chain; its full sequence is MKLAYWMYAGPAHIGTLRISSSFRNVHAIMHAPLGDDYFNVMRSMLERERNFTPVTTSVVDRNVLARGSQEKVIDNILRKDTEERPDLIVLTPTCTSSILQEDLQNFVERAKESAQCDVLLADVNHYRVNELQAADRTLEQIVRFYLDRAQRQGTLPSQRTEQPSVNILGMTTLGFHNRHDTTELQRLMADLGITVNAVIPAGASVEELQHLPRAWFNLVPYREVGLLTAQYLQDTFDQPMVAIAPMGITATADCIRQIQQVLNQQGAAVDFEPFIDRQTRFASEAAWFSHSIDCQNLTGKRAVVFGDNTHAAAFTKILSREMGIHVVLAGTYCKHDADWFEAEVAGYCDRVLISDDHNAIADAIAELEPAAIFGTQMERHVGKRLNIPCGVIAAPVHIQNFPVGYRPFVGYEGANQIVDLVYNSFTLGMEDHLLEIFGGHDTKEVLTKTVSAGSDLDWKPDGLTELNRIPGFVRGKVKRNTEKYAREQGLTAITAEVLYAAKEALGA.

Residue aspartate 36 coordinates [4Fe-4S] cluster. Aspartate 294 serves as the catalytic Proton donor. 429 to 430 (GM) lines the substrate pocket.

It belongs to the ChlB/BchB/BchZ family. As to quaternary structure, protochlorophyllide reductase is composed of three subunits; ChlL, ChlN and ChlB. Forms a heterotetramer of two ChlB and two ChlN subunits. [4Fe-4S] cluster is required as a cofactor.

The enzyme catalyses chlorophyllide a + oxidized 2[4Fe-4S]-[ferredoxin] + 2 ADP + 2 phosphate = protochlorophyllide a + reduced 2[4Fe-4S]-[ferredoxin] + 2 ATP + 2 H2O. It functions in the pathway porphyrin-containing compound metabolism; chlorophyll biosynthesis (light-independent). Functionally, component of the dark-operative protochlorophyllide reductase (DPOR) that uses Mg-ATP and reduced ferredoxin to reduce ring D of protochlorophyllide (Pchlide) to form chlorophyllide a (Chlide). This reaction is light-independent. The NB-protein (ChlN-ChlB) is the catalytic component of the complex. This Synechococcus elongatus (strain ATCC 33912 / PCC 7942 / FACHB-805) (Anacystis nidulans R2) protein is Light-independent protochlorophyllide reductase subunit B.